The sequence spans 428 residues: Tubby-like F-box protein 5 (428 aa).

Residues 17 to 65 (IGSMSRRAADGRAGGGRGGSRHSWPVLWSEQQQPPQQQQLQRQEHQQQQ) are disordered. The span at 47 to 65 (QQQPPQQQQLQRQEHQQQQ) shows a compositional bias: low complexity. One can recognise an F-box domain in the interval 65–117 (QGRWANLPPELLLDVIQRVEASEATWPARRQVVACAAVCRSWREVTKEVVKTL).

This sequence belongs to the TUB family. As to expression, ubiquitous.

The sequence is that of Tubby-like F-box protein 5 (TULP5) from Oryza sativa subsp. japonica (Rice).